Here is a 112-residue protein sequence, read N- to C-terminus: MTQFSLNDIRPVDETGLSEKELSIKKEKDEIAKLLDRQENGFIIEKMVEEFGMSYLEATTAFLEENSIPETQFAKFIPSGIIEKIQSEAIDENLLRPSVVRCEKTNTLDFLL.

Residues Phe62 to Glu92 are interaction with host RNAP. An involved in transcriptional enhancement region spans residues Asn106–Leu112.

It belongs to the Tevenvirinae late transcription coactivator family. In terms of assembly, interacts with the beta subunit of host RNAP RpoB (via flap domain). Part of the transcription activation complex containing host RNAP, the viral RNA polymerase sigma-like factor, the coactivator gp33, and the sliding clamp.

In terms of biological role, activates transcription at late promoters when the sliding clamp is present. Binds to both the host RNA polymerase (RNAP) and the upstream dsDNA. This Enterobacteria phage T4 (Bacteriophage T4) protein is Late transcription coactivator (33).